Consider the following 218-residue polypeptide: Small ribosomal subunit protein uS4 (218 aa).

Residues 111–175 (RRLQTQVLRL…SPLKNESHPE (65 aa)) enclose the S4 RNA-binding domain. The tract at residues 192-218 (KAAAEAKQAREKPPERGGGRRKRGGRR) is disordered. A compositionally biased stretch (basic and acidic residues) spans 198 to 209 (KQAREKPPERGG).

The protein belongs to the universal ribosomal protein uS4 family. Part of the 30S ribosomal subunit. Contacts protein S5. The interaction surface between S4 and S5 is involved in control of translational fidelity.

One of the primary rRNA binding proteins, it binds directly to 16S rRNA where it nucleates assembly of the body of the 30S subunit. Functionally, with S5 and S12 plays an important role in translational accuracy. This is Small ribosomal subunit protein uS4 from Methanosarcina acetivorans (strain ATCC 35395 / DSM 2834 / JCM 12185 / C2A).